Here is a 215-residue protein sequence, read N- to C-terminus: Small ribosomal subunit protein uS3 (215 aa).

Residues 39–107 (VRQYLQKKLA…PVHINIEEIR (69 aa)) form the KH type-2 domain.

This sequence belongs to the universal ribosomal protein uS3 family. Part of the 30S ribosomal subunit. Forms a tight complex with proteins S10 and S14.

Binds the lower part of the 30S subunit head. Binds mRNA in the 70S ribosome, positioning it for translation. The chain is Small ribosomal subunit protein uS3 from Nitrosomonas europaea (strain ATCC 19718 / CIP 103999 / KCTC 2705 / NBRC 14298).